The primary structure comprises 496 residues: Probable cytosol aminopeptidase (496 aa).

Mn(2+) is bound by residues Lys-262 and Asp-267. Lys-274 is a catalytic residue. Positions 285, 344, and 346 each coordinate Mn(2+). Arg-348 is a catalytic residue.

It belongs to the peptidase M17 family. Mn(2+) serves as cofactor.

The protein localises to the cytoplasm. The catalysed reaction is Release of an N-terminal amino acid, Xaa-|-Yaa-, in which Xaa is preferably Leu, but may be other amino acids including Pro although not Arg or Lys, and Yaa may be Pro. Amino acid amides and methyl esters are also readily hydrolyzed, but rates on arylamides are exceedingly low.. It carries out the reaction Release of an N-terminal amino acid, preferentially leucine, but not glutamic or aspartic acids.. Presumably involved in the processing and regular turnover of intracellular proteins. Catalyzes the removal of unsubstituted N-terminal amino acids from various peptides. The chain is Probable cytosol aminopeptidase from Rhizobium leguminosarum bv. trifolii (strain WSM2304).